The primary structure comprises 255 residues: Glutamate racemase (255 aa).

Residues 7 to 8 (DS) and 39 to 40 (YG) each bind substrate. The Proton donor/acceptor role is filled by Cys70. 71–72 (NT) lines the substrate pocket. The active-site Proton donor/acceptor is Cys181. Residue 182 to 183 (TH) coordinates substrate.

It belongs to the aspartate/glutamate racemases family.

It catalyses the reaction L-glutamate = D-glutamate. It functions in the pathway cell wall biogenesis; peptidoglycan biosynthesis. Functionally, provides the (R)-glutamate required for cell wall biosynthesis. This is Glutamate racemase from Helicobacter pylori (strain G27).